The sequence spans 229 residues: Nectarin-1 (229 aa).

Positions 1-32 (MAAFGINSKIFQSMEMAILFLLAISIDRYCFA) are cleaved as a signal peptide. Cys-42 and Cys-57 are disulfide-bonded. Asn-60 carries N-linked (GlcNAc...) asparagine glycosylation. The region spanning 69–217 (LAISKPGATN…TFQINTEDVQ (149 aa)) is the Cupin type-1 domain. Residues His-117, His-119, Glu-124, and His-163 each coordinate Mn(2+).

In terms of assembly, monomer. In the absence of manganese, it forms tetrameric and pentameric forms which show superoxide dismutase activity. It depends on Mn(2+) as a cofactor. In terms of tissue distribution, nectary tissues and to a lower level ovary. Not detected in petals, stems, leaves, roots or other floral tissues.

It is found in the secreted. The protein resides in the extracellular space. The protein localises to the apoplast. It carries out the reaction 2 superoxide + 2 H(+) = H2O2 + O2. Its function is as follows. May interact with bacterial adhesins thereby protecting the reproductive tissues from microbial attack. Has no oxalate oxidase activity. The protein is Nectarin-1 (NECI) of Nicotiana langsdorffii x Nicotiana sanderae (Ornamental tobacco).